The primary structure comprises 141 residues: Flagellar assembly factor FliW (141 aa).

It belongs to the FliW family. In terms of assembly, interacts with translational regulator CsrA and flagellin(s).

Its subcellular location is the cytoplasm. Acts as an anti-CsrA protein, binds CsrA and prevents it from repressing translation of its target genes, one of which is flagellin. Binds to flagellin and participates in the assembly of the flagellum. The chain is Flagellar assembly factor FliW from Clostridium botulinum (strain Alaska E43 / Type E3).